The primary structure comprises 192 residues: Segregation and condensation protein B (192 aa).

Belongs to the ScpB family. In terms of assembly, homodimer. Homodimerization may be required to stabilize the binding of ScpA to the Smc head domains. Component of a cohesin-like complex composed of ScpA, ScpB and the Smc homodimer, in which ScpA and ScpB bind to the head domain of Smc. The presence of the three proteins is required for the association of the complex with DNA.

It localises to the cytoplasm. In terms of biological role, participates in chromosomal partition during cell division. May act via the formation of a condensin-like complex containing Smc and ScpA that pull DNA away from mid-cell into both cell halves. The protein is Segregation and condensation protein B of Oceanobacillus iheyensis (strain DSM 14371 / CIP 107618 / JCM 11309 / KCTC 3954 / HTE831).